We begin with the raw amino-acid sequence, 359 residues long: MRAYNFCAGPAALPTAVLEKAQQELLDWQGKGLSIMEMSHRSADYVAVAEKAEADLRKLMNIPENYKVLFLQGGASLQFSAIPLNLLGKNNKADYIHTGIWSEKALKEAKRYGDINVVEAGIKVDGKFAISEQSEWNLSDDAAYVHYADNETIGGLQFAGVPDVKAPLVCDFSSSILSAPLDVSKFGLIYAGAQKNIGPAGLTIVIIRDDLLDQAKAEIPSILKYADQAKNGSMVNTPSTYAWYLSGLVFEWLLEQGGVDAIHKVNLEKAQLLYGYIDSSDFYNNPIAIPNRSIMNVPFTLADEALEKQFLKEAEENHLLNLAGHRSVGGMRASIYNAVPLEGVQALIRFMDDFAKRNG.

Arg41 is a binding site for L-glutamate. Pyridoxal 5'-phosphate is bound by residues Ala75–Ser76, Trp101, Thr152, Asp171, and Gln194. N6-(pyridoxal phosphate)lysine is present on Lys195. Pyridoxal 5'-phosphate is bound at residue Asn236 to Thr237.

The protein belongs to the class-V pyridoxal-phosphate-dependent aminotransferase family. SerC subfamily. Homodimer. Pyridoxal 5'-phosphate is required as a cofactor.

The protein localises to the cytoplasm. It carries out the reaction O-phospho-L-serine + 2-oxoglutarate = 3-phosphooxypyruvate + L-glutamate. It catalyses the reaction 4-(phosphooxy)-L-threonine + 2-oxoglutarate = (R)-3-hydroxy-2-oxo-4-phosphooxybutanoate + L-glutamate. Its pathway is amino-acid biosynthesis; L-serine biosynthesis; L-serine from 3-phospho-D-glycerate: step 2/3. It functions in the pathway cofactor biosynthesis; pyridoxine 5'-phosphate biosynthesis; pyridoxine 5'-phosphate from D-erythrose 4-phosphate: step 3/5. In terms of biological role, catalyzes the reversible conversion of 3-phosphohydroxypyruvate to phosphoserine and of 3-hydroxy-2-oxo-4-phosphonooxybutanoate to phosphohydroxythreonine. The polypeptide is Phosphoserine aminotransferase (Acinetobacter baumannii (strain ACICU)).